The chain runs to 514 residues: 2-isopropylmalate synthase (514 aa).

In terms of domain architecture, Pyruvate carboxyltransferase spans 5–268; that stretch reads LIIFDTTLRD…DVGIDTTQIV (264 aa). Asp-14, His-202, His-204, and Asn-239 together coordinate Mn(2+). Residues 395–514 are regulatory domain; the sequence is KFVSLSQHSE…KDDKLNPQRA (120 aa).

This sequence belongs to the alpha-IPM synthase/homocitrate synthase family. LeuA type 1 subfamily. Homodimer. Requires Mn(2+) as cofactor.

The protein resides in the cytoplasm. It carries out the reaction 3-methyl-2-oxobutanoate + acetyl-CoA + H2O = (2S)-2-isopropylmalate + CoA + H(+). Its pathway is amino-acid biosynthesis; L-leucine biosynthesis; L-leucine from 3-methyl-2-oxobutanoate: step 1/4. Catalyzes the condensation of the acetyl group of acetyl-CoA with 3-methyl-2-oxobutanoate (2-ketoisovalerate) to form 3-carboxy-3-hydroxy-4-methylpentanoate (2-isopropylmalate). The protein is 2-isopropylmalate synthase of Burkholderia vietnamiensis (strain G4 / LMG 22486) (Burkholderia cepacia (strain R1808)).